Here is a 250-residue protein sequence, read N- to C-terminus: Ubiquinone/menaquinone biosynthesis C-methyltransferase UbiE (250 aa).

Residues Ser73, Asp94, and 122–123 (NA) contribute to the S-adenosyl-L-methionine site.

Belongs to the class I-like SAM-binding methyltransferase superfamily. MenG/UbiE family.

The enzyme catalyses a 2-demethylmenaquinol + S-adenosyl-L-methionine = a menaquinol + S-adenosyl-L-homocysteine + H(+). It carries out the reaction a 2-methoxy-6-(all-trans-polyprenyl)benzene-1,4-diol + S-adenosyl-L-methionine = a 5-methoxy-2-methyl-3-(all-trans-polyprenyl)benzene-1,4-diol + S-adenosyl-L-homocysteine + H(+). The protein operates within quinol/quinone metabolism; menaquinone biosynthesis; menaquinol from 1,4-dihydroxy-2-naphthoate: step 2/2. It functions in the pathway cofactor biosynthesis; ubiquinone biosynthesis. Functionally, methyltransferase required for the conversion of demethylmenaquinol (DMKH2) to menaquinol (MKH2) and the conversion of 2-polyprenyl-6-methoxy-1,4-benzoquinol (DDMQH2) to 2-polyprenyl-3-methyl-6-methoxy-1,4-benzoquinol (DMQH2). This is Ubiquinone/menaquinone biosynthesis C-methyltransferase UbiE from Legionella pneumophila subsp. pneumophila (strain Philadelphia 1 / ATCC 33152 / DSM 7513).